The chain runs to 119 residues: Small ribosomal subunit protein bS16 (119 aa).

The protein belongs to the bacterial ribosomal protein bS16 family.

The polypeptide is Small ribosomal subunit protein bS16 (Chlamydia felis (strain Fe/C-56) (Chlamydophila felis)).